The chain runs to 392 residues: Streptogrisin-D (392 aa).

The first 64 residues, 1–64, serve as a signal peptide directing secretion; it reads MCVSRRRNSG…AGFTFQTANA (64 aa). A propeptide spanning residues 65–204 is cleaved from the precursor; sequence SDDVPAFGAK…NRTAGEFTPL (140 aa). An intrachain disulfide couples cysteine 218 to cysteine 238. Active-site charge relay system residues include histidine 237, aspartate 266, and serine 348. Cysteine 342 and cysteine 369 are oxidised to a cystine.

It belongs to the peptidase S1 family. Homodimer.

In terms of biological role, has a primary specificity for large aliphatic or aromatic amino acids. This Streptomyces griseus protein is Streptogrisin-D (sprD).